The primary structure comprises 566 residues: Phenylalanine--tRNA ligase beta subunit (566 aa).

Residues 287–362 (YFQEEVEFNV…IGEGLSSFNP (76 aa)) form the B5 domain. Residues Asp-340, Asp-346, Glu-349, and Asp-350 each coordinate Mg(2+).

It belongs to the phenylalanyl-tRNA synthetase beta subunit family. Type 2 subfamily. As to quaternary structure, tetramer of two alpha and two beta subunits. Requires Mg(2+) as cofactor.

Its subcellular location is the cytoplasm. The enzyme catalyses tRNA(Phe) + L-phenylalanine + ATP = L-phenylalanyl-tRNA(Phe) + AMP + diphosphate + H(+). This chain is Phenylalanine--tRNA ligase beta subunit, found in Borreliella burgdorferi (strain ATCC 35210 / DSM 4680 / CIP 102532 / B31) (Borrelia burgdorferi).